The chain runs to 427 residues: Fc receptor-like B (427 aa).

The N-terminal stretch at 1 to 17 (MWMLAALLLLVPRSGKA) is a signal peptide. Ig-like C2-type domains are found at residues 23-101 (PVLT…LSVS) and 103-189 (DWLI…VAVT). 2 disulfide bridges follow: Cys-44/Cys-85 and Cys-124/Cys-168. Asn-152 is a glycosylation site (N-linked (GlcNAc...) asparagine). The segment covering 401–418 (TPETPNSHVTVNPATPET) has biased composition (polar residues). The disordered stretch occupies residues 401-427 (TPETPNSHVTVNPATPETTVMEGRVDS).

As to expression, expressed at low levels. Expressed in B-lymphocytes. Detected in spleen, lymph node, kidney, lung and brain.

Its subcellular location is the cytoplasm. The protein localises to the endoplasmic reticulum. This is Fc receptor-like B (Fcrlb) from Mus musculus (Mouse).